A 186-amino-acid polypeptide reads, in one-letter code: ADP-ribosylation factor-like protein 8B (186 aa).

The note=Mediates targeting to membranes intramembrane region spans 1–19 (MLALISRLLDWFRSLFWKE). GTP-binding positions include 29–35 (QYSGKTT), 71–75 (DIGGQ), and 130–133 (NKRD). K141 participates in a covalent cross-link: Glycyl lysine isopeptide (Lys-Gly) (interchain with G-Cter in ubiquitin).

The protein belongs to the small GTPase superfamily. Arf family. In terms of assembly, interacts with tubulin. Interacts with BORCS5; recruits ARL8B to lysosomes. Interacts with VPS41; the interaction mediates the recruitment of the HOPS complex to lysosomes. Interacts (GTP-bound form) with PLEKHM2 (via RUN domain); the interaction is required to recruit the motor protein kinesin-1 on lysosomes. Interacts (GTP-bound form) with PLEKHM1 (via RUN domain); the interaction is required for PLEKHM1 localization to lysosomes and for ARL8B function in delivery and degradation of endocytic and autophagic cargo in lysosomes. PLEKHM1 and PLEKHM2 compete for interaction with ARL8B. Interacts (GTP-bound form) with RUFY1; the interaction is required for RUFY1 endosomal location. When GTP-bound, interacts with RUFY3 and RUFY4, but not with RUFY1, nor RUFY2. Post-translationally, ubiquitinated at Lys-141 by RNF167, leading to its degradation.

It is found in the late endosome membrane. It localises to the lysosome membrane. The protein localises to the cytoplasm. Its subcellular location is the cytoskeleton. The protein resides in the spindle. It is found in the cell projection. It localises to the axon. The protein localises to the synapse. Its subcellular location is the cytolytic granule membrane. The protein resides in the early endosome membrane. The enzyme catalyses GTP + H2O = GDP + phosphate + H(+). Functionally, small GTPase which cycles between active GTP-bound and inactive GDP-bound states. In its active state, binds to a variety of effector proteins playing a key role in the regulation of lysosomal positioning which is important for nutrient sensing, natural killer cell-mediated cytotoxicity and antigen presentation. Along with its effectors, orchestrates lysosomal transport and fusion. Localizes specifically to lysosomal membranes and mediates anterograde lysosomal motility by recruiting PLEKHM2, which in turn recruits the motor protein kinesin-1 on lysosomes. Required for lysosomal and cytolytic granule exocytosis. Critical factor involved in NK cell-mediated cytotoxicity. Drives the polarization of cytolytic granules and microtubule-organizing centers (MTOCs) toward the immune synapse between effector NK lymphocytes and target cells. In neurons, mediates the anterograde axonal long-range transport of presynaptic lysosome-related vesicles required for presynaptic biogenesis and synaptic function. Also acts as a regulator of endosome to lysosome trafficking pathways of special significance for host defense. Recruits RUFY1 onto early endosomes regulating endosomes to trans-Golgi network proteins retrieval. Regulates cargo trafficking to lysosomes by binding to PLEKHM1 and recruiting the HOPS subunit VPS41, resulting in functional assembly of the HOPS complex on lysosomal membranes. Plays an important role in cargo delivery to lysosomes for antigen presentation and microbial killing. Directs the intersection of CD1d with lipid antigens in lysosomes, and plays a role in intersecting phagosomes with lysosomes to generate phagolysosomes that kill microbes. Involved in the process of MHC II presentation. Regulates the delivery of antigens to lysosomes and the formation of MHC II-peptide complexes through the recruitment of the HOPS complex to lysosomes allowing the fusion of late endosomes to lysosomes. May play a role in chromosome segregation. The polypeptide is ADP-ribosylation factor-like protein 8B (ARL8B) (Macaca fascicularis (Crab-eating macaque)).